We begin with the raw amino-acid sequence, 500 residues long: Protein dcd1B (500 aa).

Positions 1 to 20 (MNLIKLFIICCLLISITVKS) are cleaved as a signal peptide. 6 N-linked (GlcNAc...) asparagine glycosylation sites follow: asparagine 284, asparagine 331, asparagine 441, asparagine 459, asparagine 474, and asparagine 475. The interval 464-500 (FSEQPPLPPPNNSSSSDSNSNSNSDSSSSSDSNSNSN) is disordered. Low complexity predominate over residues 475 to 500 (NSSSSDSNSNSNSDSSSSSDSNSNSN).

The protein localises to the secreted. The sequence is that of Protein dcd1B (dcd1B) from Dictyostelium discoideum (Social amoeba).